We begin with the raw amino-acid sequence, 46 residues long: Large ribosomal subunit protein bL34 (46 aa).

The segment covering 1 to 17 (MTKRTLRGSVRKKKRTS) has biased composition (basic residues). The interval 1-26 (MTKRTLRGSVRKKKRTSGFRARMETP) is disordered.

It belongs to the bacterial ribosomal protein bL34 family.

The sequence is that of Large ribosomal subunit protein bL34 (rpmH) from Pseudanabaena sp. (strain PCC 6903).